The primary structure comprises 1767 residues: Endo-alpha-N-acetylgalactosaminidase (1767 aa).

The N-terminal stretch at M1–D39 is a signal peptide. Composition is skewed to basic and acidic residues over residues K61–E75 and D84–A111. Disordered regions lie at residues K61–E124 and V301–V324. The segment covering A112–E124 has biased composition (low complexity). Over residues D304–V324 the composition is skewed to basic and acidic residues. Positions 577, 579, 581, 583, and 588 each coordinate Ca(2+). The catalytic stretch occupies residues G602–F893. D658 provides a ligand contact to substrate. The active-site Nucleophile is D764. Residue E796 is the Proton donor/acceptor of the active site. Ca(2+) is bound by residues D1233, E1235, E1281, W1284, and D1411. A disordered region spans residues L1711 to T1730. Basic and acidic residues predominate over residues K1717–T1730. The short motif at L1735–G1739 is the LPXTG sorting signal element. Pentaglycyl murein peptidoglycan amidated threonine is present on T1738. Residues G1739–D1767 constitute a propeptide, removed by sortase.

This sequence belongs to the glycosyl hydrolase 101 family. A subfamily.

It localises to the secreted. Its subcellular location is the cell wall. The catalysed reaction is a 3-O-[beta-D-galactosyl-(1-&gt;3)-N-acetyl-alpha-D-galactosaminyl]-L-threonyl-[protein] + H2O = beta-D-galactosyl-(1-&gt;3)-N-acetyl-D-galactosamine + L-threonyl-[protein]. It carries out the reaction a 3-O-[beta-D-galactosyl-(1-&gt;3)-N-acetyl-alpha-D-galactosaminyl]-L-seryl-[protein] + H2O = beta-D-galactosyl-(1-&gt;3)-N-acetyl-D-galactosamine + L-seryl-[protein]. Its function is as follows. Involved in the breakdown of mucin-type O-linked glycans. Specifically removes the T-antigen disaccharide (Gal-beta-1,3-GalNAc-alpha) from extracellular host glycoproteins. Representative of a broadly important class of virulence factors. The chain is Endo-alpha-N-acetylgalactosaminidase from Streptococcus pneumoniae serotype 4 (strain ATCC BAA-334 / TIGR4).